We begin with the raw amino-acid sequence, 118 residues long: UPF0102 protein Francci3_3586 (118 aa).

This sequence belongs to the UPF0102 family.

In Frankia casuarinae (strain DSM 45818 / CECT 9043 / HFP020203 / CcI3), this protein is UPF0102 protein Francci3_3586.